The sequence spans 699 residues: Ciliated left-right organizer metallopeptidase (699 aa).

Positions 1 to 18 (MKMWRLLLLGVATGRCLH) are cleaved as a signal peptide. At 19–663 (EETQKSVRLL…SLDHNPSMTE (645 aa)) the chain is on the extracellular side. Residue H238 coordinates Zn(2+). Residue E239 is part of the active site. Positions 242 and 318 each coordinate Zn(2+). A helical membrane pass occupies residues 664–684 (LLLSTGFCLLVLILVGALGTL). Over 685–699 (AYQKRAMLQVAPSTT) the chain is Cytoplasmic.

This sequence belongs to the peptidase M8 family. The cofactor is Zn(2+). As to expression, specifically expressed in ciliated left-right organizer.

It is found in the membrane. Putative metalloproteinase that plays a role in left-right patterning process. The sequence is that of Ciliated left-right organizer metallopeptidase from Mus musculus (Mouse).